The sequence spans 211 residues: Glycerol-3-phosphate acyltransferase (211 aa).

A run of 5 helical transmembrane segments spans residues 8–28 (YCLA…LILT), 84–104 (LALP…WLGF), 116–136 (VLLA…FAVA), 145–165 (AALC…GMGL), and 170–190 (LAQS…LVFL).

This sequence belongs to the PlsY family. As to quaternary structure, probably interacts with PlsX.

The protein localises to the cell inner membrane. It carries out the reaction an acyl phosphate + sn-glycerol 3-phosphate = a 1-acyl-sn-glycero-3-phosphate + phosphate. It participates in lipid metabolism; phospholipid metabolism. Functionally, catalyzes the transfer of an acyl group from acyl-phosphate (acyl-PO(4)) to glycerol-3-phosphate (G3P) to form lysophosphatidic acid (LPA). This enzyme utilizes acyl-phosphate as fatty acyl donor, but not acyl-CoA or acyl-ACP. The sequence is that of Glycerol-3-phosphate acyltransferase from Granulibacter bethesdensis (strain ATCC BAA-1260 / CGDNIH1).